The sequence spans 328 residues: DNA-directed RNA polymerase subunit alpha (328 aa).

Residues 1–231 form an alpha N-terminal domain (alpha-NTD) region; sequence MIYQMQMPAK…EHVTFFANFS (231 aa). Residues 247-328 are alpha C-terminal domain (alpha-CTD); sequence DEFETMRRLL…MDITRYQMKG (82 aa).

This sequence belongs to the RNA polymerase alpha chain family. Homodimer. The RNAP catalytic core consists of 2 alpha, 1 beta, 1 beta' and 1 omega subunit. When a sigma factor is associated with the core the holoenzyme is formed, which can initiate transcription.

It carries out the reaction RNA(n) + a ribonucleoside 5'-triphosphate = RNA(n+1) + diphosphate. In terms of biological role, DNA-dependent RNA polymerase catalyzes the transcription of DNA into RNA using the four ribonucleoside triphosphates as substrates. The sequence is that of DNA-directed RNA polymerase subunit alpha from Chlorobium luteolum (strain DSM 273 / BCRC 81028 / 2530) (Pelodictyon luteolum).